A 515-amino-acid polypeptide reads, in one-letter code: Maturase K (515 aa).

Belongs to the intron maturase 2 family. MatK subfamily.

It localises to the plastid. It is found in the chloroplast. Usually encoded in the trnK tRNA gene intron. Probably assists in splicing its own and other chloroplast group II introns. This is Maturase K from Pseudotsuga menziesii (Douglas-fir).